The primary structure comprises 80 residues: Regulatory protein HrpD6 (80 aa).

Its function is as follows. Involved in the regulation of several genes of the hrp-hrc-hpa cluster, which encodes a type III secretion system (T3SS). Upregulates the expression of hpa2, hpa1 and hpaB and partially controls the expression of hrcC and hrcT. Controls the secretion of the T3SS TAL effector AvrXa27. Also regulates the expression of several HrpX-regulated protein (Xrp) genes. Has no influence on hrpG or hrpX expression. The chain is Regulatory protein HrpD6 from Xanthomonas oryzae pv. oryzicola.